We begin with the raw amino-acid sequence, 130 residues long: Small ribosomal subunit protein uS8 (130 aa).

The protein belongs to the universal ribosomal protein uS8 family. As to quaternary structure, part of the 30S ribosomal subunit. Contacts proteins S5 and S12.

In terms of biological role, one of the primary rRNA binding proteins, it binds directly to 16S rRNA central domain where it helps coordinate assembly of the platform of the 30S subunit. In Buchnera aphidicola subsp. Baizongia pistaciae (strain Bp), this protein is Small ribosomal subunit protein uS8.